The chain runs to 363 residues: Ribosomal RNA large subunit methyltransferase M (363 aa).

Residues serine 194, cysteine 227–glycine 230, aspartate 246, aspartate 266, and aspartate 284 each bind S-adenosyl-L-methionine. Lysine 313 functions as the Proton acceptor in the catalytic mechanism.

It belongs to the class I-like SAM-binding methyltransferase superfamily. RNA methyltransferase RlmE family. RlmM subfamily. Monomer.

Its subcellular location is the cytoplasm. The enzyme catalyses cytidine(2498) in 23S rRNA + S-adenosyl-L-methionine = 2'-O-methylcytidine(2498) in 23S rRNA + S-adenosyl-L-homocysteine + H(+). Catalyzes the 2'-O-methylation at nucleotide C2498 in 23S rRNA. The protein is Ribosomal RNA large subunit methyltransferase M of Mannheimia succiniciproducens (strain KCTC 0769BP / MBEL55E).